Reading from the N-terminus, the 435-residue chain is MSEFRQATDAFASNPAESKQEIRNYTMNFGPQHPAAHGVLRLILEMDGETVVRADPHIGLLHRGTEKLAESKPFNQSVPYMDRLDYVSMMCNEHAYVRAIESLMGIEAPERAQYIRTMFDEITRIKNHLMWVGSNALDLGAMAVMLYAFREREELMDVYEAVSGARMHAAYYRPGGVYRDLPDRMPRYKESRWHKGGALKKLNAAREGSMLDFLEDFTNTFPLRVDEYETLLTDNRIWKQRTVDVGIISPDLARAWGMTGPMLRGSGIEWDLRKKQPYAKYDAVDFDIPVGTNGDCYDRYLVRVAEMRESNRIIKQCVKWLKANPGPVMVTNFKVAPPSREGMKDDMEALIHHFKLFSEGYCVPAGETYSAVEAPKGEFGCYLMSDGANKPFRVHLRAPGFAHLSSMDAVVRGYLLADVVAMIGTYDLVFGEVDR.

Belongs to the complex I 49 kDa subunit family. NDH-1 is composed of 14 different subunits. Subunits NuoB, C, D, E, F, and G constitute the peripheral sector of the complex.

It localises to the cell inner membrane. The enzyme catalyses a quinone + NADH + 5 H(+)(in) = a quinol + NAD(+) + 4 H(+)(out). Its function is as follows. NDH-1 shuttles electrons from NADH, via FMN and iron-sulfur (Fe-S) centers, to quinones in the respiratory chain. The immediate electron acceptor for the enzyme in this species is believed to be ubiquinone. Couples the redox reaction to proton translocation (for every two electrons transferred, four hydrogen ions are translocated across the cytoplasmic membrane), and thus conserves the redox energy in a proton gradient. This Xanthomonas oryzae pv. oryzae (strain MAFF 311018) protein is NADH-quinone oxidoreductase subunit D.